Reading from the N-terminus, the 486-residue chain is UDP-GalNAc:beta-1,3-N-acetylgalactosaminyltransferase 2 (486 aa).

At 1–10 (MRHLLFLCPC) the chain is on the cytoplasmic side. The chain crosses the membrane as a helical; Signal-anchor for type II membrane protein span at residues 11-31 (VIGVAFHLWLFNFSGLFSWFL). At 32–486 (VWSPHSYDIV…CGNPCACEDR (455 aa)) the chain is on the lumenal side. 2 N-linked (GlcNAc...) asparagine glycosylation sites follow: Asn103 and Asn160.

This sequence belongs to the glycosyltransferase 31 family.

The protein resides in the golgi apparatus membrane. The protein localises to the endoplasmic reticulum. The enzyme catalyses 3-O-(N-acetyl-beta-D-glucosaminyl-(1-&gt;4)-alpha-D-mannosyl)-L-threonyl-[protein] + UDP-N-acetyl-alpha-D-galactosamine = 3-O-[beta-D-GalNAc-(1-&gt;3)-beta-D-GlcNAc-(1-&gt;4)-alpha-D-Man]-L-Thr-[protein] + UDP + H(+). It participates in protein modification; protein glycosylation. Its function is as follows. Beta-1,3-N-acetylgalactosaminyltransferase that synthesizes a unique carbohydrate structure, GalNAc-beta-1-3GlcNAc, on N- and O-glycans. Has no galactose nor galactosaminyl transferase activity toward any acceptor substrate. Involved in alpha-dystroglycan (dag1) glycosylation. The polypeptide is UDP-GalNAc:beta-1,3-N-acetylgalactosaminyltransferase 2 (b3galnt2) (Xenopus laevis (African clawed frog)).